Reading from the N-terminus, the 634-residue chain is Protection of telomeres protein 1 (634 aa).

2 DNA-binding regions span residues K33–T48 and S270–R273.

It belongs to the telombin family. Homodimer or homooligomer. Component of the shelterin complex (telosome) composed of TERF1, TERF2, TINF2, TERF2IP, ACD and POT1. Binds single-stranded telomeric DNA as a monomer. Associated component of the telomerase holoenzyme complex. Found in a complex with TERF1, TINF2 and TNKS1. Interacts with TNKS1. Forms heterodimers with ACD. Identified in a complex with ACD and single-stranded telomeric DNA. As to expression, ubiquitous.

It localises to the nucleus. Its subcellular location is the chromosome. The protein localises to the telomere. Component of the telomerase ribonucleoprotein (RNP) complex that is essential for the replication of chromosome termini. Is a component of the double-stranded telomeric DNA-binding TRF1 complex which is involved in the regulation of telomere length by cis-inhibition of telomerase. Also acts as a single-stranded telomeric DNA-binding protein and thus may act as a downstream effector of the TRF1 complex and may transduce information about telomere maintenance and/or length to the telomere terminus. Component of the shelterin complex (telosome) that is involved in the regulation of telomere length and protection. Shelterin associates with arrays of double-stranded TTAGGG repeats added by telomerase and protects chromosome ends; without its protective activity, telomeres are no longer hidden from the DNA damage surveillance and chromosome ends are inappropriately processed by DNA repair pathways. Binds to two or more telomeric single-stranded 5'-TTAGGG-3' repeats (G-strand) and with high specificity to a minimal telomeric single-stranded 5'-TAGGGTTAG-3' sequence. Binds telomeric single-stranded sequences internally or at proximity of a 3'-end. Its activity is TERT dependent but it does not increase TERT activity by itself. In contrast, the ACD-POT1 heterodimer enhances telomere elongation by increasing telomerase processivity. The sequence is that of Protection of telomeres protein 1 (POT1) from Homo sapiens (Human).